Consider the following 104-residue polypeptide: Pyrimidine/purine nucleoside phosphorylase (104 aa).

It belongs to the nucleoside phosphorylase PpnP family.

The catalysed reaction is a purine D-ribonucleoside + phosphate = a purine nucleobase + alpha-D-ribose 1-phosphate. It catalyses the reaction adenosine + phosphate = alpha-D-ribose 1-phosphate + adenine. The enzyme catalyses cytidine + phosphate = cytosine + alpha-D-ribose 1-phosphate. It carries out the reaction guanosine + phosphate = alpha-D-ribose 1-phosphate + guanine. The catalysed reaction is inosine + phosphate = alpha-D-ribose 1-phosphate + hypoxanthine. It catalyses the reaction thymidine + phosphate = 2-deoxy-alpha-D-ribose 1-phosphate + thymine. The enzyme catalyses uridine + phosphate = alpha-D-ribose 1-phosphate + uracil. It carries out the reaction xanthosine + phosphate = alpha-D-ribose 1-phosphate + xanthine. Catalyzes the phosphorolysis of diverse nucleosides, yielding D-ribose 1-phosphate and the respective free bases. Can use uridine, adenosine, guanosine, cytidine, thymidine, inosine and xanthosine as substrates. Also catalyzes the reverse reactions. This chain is Pyrimidine/purine nucleoside phosphorylase, found in Leptothrix cholodnii (strain ATCC 51168 / LMG 8142 / SP-6) (Leptothrix discophora (strain SP-6)).